Consider the following 185-residue polypeptide: Elongation factor P (185 aa).

The protein belongs to the elongation factor P family.

It localises to the cytoplasm. Its pathway is protein biosynthesis; polypeptide chain elongation. In terms of biological role, involved in peptide bond synthesis. Stimulates efficient translation and peptide-bond synthesis on native or reconstituted 70S ribosomes in vitro. Probably functions indirectly by altering the affinity of the ribosome for aminoacyl-tRNA, thus increasing their reactivity as acceptors for peptidyl transferase. The polypeptide is Elongation factor P (Bacillus cereus (strain B4264)).